The primary structure comprises 240 residues: Probable transcriptional regulator ycf27 (240 aa).

The region spanning 5-118 (KILVIDDEAS…ELEARIRSVL (114 aa)) is the Response regulatory domain. A 4-aspartylphosphate modification is found at Asp-54. Positions 74-92 (DVPIIMLTALSDVSDRITG) form a DNA-binding region, H-T-H motif. The ompR/PhoB-type DNA-binding region spans 133 to 234 (SGIINIGFLK…ARGTGYLFQR (102 aa)).

The protein localises to the plastid. It is found in the chloroplast. Probable promoter-specific protein mediating the interaction between DNA and RNA polymerase. In Porphyridium aerugineum (Red microalga), this protein is Probable transcriptional regulator ycf27 (ycf27).